Reading from the N-terminus, the 109-residue chain is Guanylate cyclase activator 2B (109 aa).

The first 23 residues, 1–23, serve as a signal peptide directing secretion; sequence MKVLALPVAVAAMLLVLAQNTQS. Residues 24–94 constitute a propeptide that is removed on maturation; it reads VYIQYEGFQV…NIFRALRSIS (71 aa). Cystine bridges form between cysteine 65–cysteine 78, cysteine 98–cysteine 106, and cysteine 101–cysteine 109.

It belongs to the guanylin family. As to expression, small and large intestine and atria and ventricles of heart. Both uroguanylin and prouroguanylin are found in plasma.

It is found in the secreted. In terms of biological role, endogenous activator of intestinal guanylate cyclase. It stimulates this enzyme through the same receptor binding region as the heat-stable enterotoxins. May be a potent physiological regulator of intestinal fluid and electrolyte transport. May be an autocrine/paracrine regulator of intestinal salt and water transport. In Didelphis virginiana (North American opossum), this protein is Guanylate cyclase activator 2B (GUCA2B).